Reading from the N-terminus, the 2210-residue chain is Filamin-A (2210 aa).

Calponin-homology (CH) domains follow at residues 15-120 and 139-242; these read KIQQ…LHYS and HTPK…NSKL. Filamin repeat units follow at residues 249 to 347, 349 to 447, 448 to 544, 545 to 635, 638 to 734, 735 to 831, 832 to 929, 930 to 1022, 1023 to 1121, 1122 to 1217, 1218 to 1312, 1322 to 1423, 1424 to 1515, 1516 to 1603, 1606 to 1698, 1699 to 1796, 1799 to 1891, 1893 to 1986, 1988 to 2079, and 2116 to 2210; these read RPKT…PVKV, GHAG…PVKV, APLS…EVKV, GPKK…IAQI, RTDF…RVYV, GVPV…VVVE, QTVD…VVNV, KSGC…RVLV, EETV…VMTV, FPKS…KLEA, FPTG…SIKA, SEYI…KFHV, DSIT…FAKI, TGEG…KVTV, REVG…TVKV, AGEG…QFTV, LRDS…KVYV, PDAG…RIKV, KDVA…KVNA, and TFKS…QIDV.

It belongs to the filamin family. Interacts with Ten-m. Germline-specific in females (at protein level). Expressed in ovary.

The protein localises to the cytoplasm. Its subcellular location is the cytoskeleton. It localises to the cell membrane. Functionally, involved in the germline ring canal formation. May tether actin microfilament within the ovarian ring canal to the cell membrane. Contributes to actin microfilaments organization. This Drosophila melanogaster (Fruit fly) protein is Filamin-A (cher).